The chain runs to 565 residues: Glucose-6-phosphate isomerase (565 aa).

Glu373 (proton donor) is an active-site residue. Active-site residues include His404 and Lys530.

It belongs to the GPI family.

It localises to the cytoplasm. It carries out the reaction alpha-D-glucose 6-phosphate = beta-D-fructose 6-phosphate. The protein operates within carbohydrate biosynthesis; gluconeogenesis. It functions in the pathway carbohydrate degradation; glycolysis; D-glyceraldehyde 3-phosphate and glycerone phosphate from D-glucose: step 2/4. Catalyzes the reversible isomerization of glucose-6-phosphate to fructose-6-phosphate. This is Glucose-6-phosphate isomerase from Corynebacterium jeikeium (strain K411).